The chain runs to 219 residues: MENTDAIQVSSFPLPPAQYYKLYTDENVRNNRAPKPPAPIQGTYQMFGQQFSTEDNIIRPLEAQGFKRLYPQHFDRRKELKKLNHSLLVNFLDLIDLLVHNPDSPQRAEKIEDLNLLFVHIHHLLNEFRPHQARETLRVMMELQKRQRQETTQRFQNHLEKVREMVNNAFASLPDPAESDRLNSTVEPMDTGDDGEAGKSRGEGCHPLDRLMCELVDKM.

Residues 173 to 203 (LPDPAESDRLNSTVEPMDTGDDGEAGKSRGE) form a disordered region.

It belongs to the Mediator complex subunit 7 family. In terms of assembly, component of the Mediator complex.

The protein localises to the nucleus. Its function is as follows. Component of the Mediator complex, a coactivator involved in the regulated transcription of nearly all RNA polymerase II-dependent genes. Mediator functions as a bridge to convey information from gene-specific regulatory proteins to the basal RNA polymerase II transcription machinery. Mediator is recruited to promoters by direct interactions with regulatory proteins and serves as a scaffold for the assembly of a functional preinitiation complex with RNA polymerase II and the general transcription factors. The polypeptide is Mediator of RNA polymerase II transcription subunit 7 (MED7) (Aedes aegypti (Yellowfever mosquito)).